A 1018-amino-acid polypeptide reads, in one-letter code: D-2-hydroxyglutarate dehydrogenase (1018 aa).

Residues 48-281 enclose the FAD-binding PCMH-type domain; it reads YQLLPDAVVF…TEARLDITRL (234 aa). Arg402 and His500 together coordinate (R)-2-hydroxyglutarate. Residues 662–695 enclose the 4Fe-4S ferredoxin-type domain; it reads FSHEVKEAMSGCLACKACSTQCPIKIDVPEFRSR. [4Fe-4S] cluster contacts are provided by Cys673, Cys676, Cys679, and Cys683.

In the N-terminal section; belongs to the FAD-binding oxidoreductase/transferase type 4 family. Homotetramer. The cofactor is [4Fe-4S] cluster. Requires FAD as cofactor.

The catalysed reaction is (R)-2-hydroxyglutarate + A = 2-oxoglutarate + AH2. Its activity is regulated as follows. Activity is completely inhibited by the addition of 0.5 mM Mn(2+), Ni(2+), or Co(2+) and partially inhibited by 0.5 mM Zn(2+). In terms of biological role, catalyzes the oxidation of D-2-hydroxyglutarate (D-2-HGA) to 2-oxoglutarate. Appears to be the only D2HGDH in E.coli, providing the way to recycle D-2-HGA produced during L-serine synthesis by SerA, by converting it back to 2-oxoglutarate. The physiological molecule that functions as the primary electron acceptor during D-2-HGA oxidation by YdiJ in E.coli is unknown. Shows strict substrate specificity towards D-2-HGA, since it has no detectable activity on L-2-hydroxyglutarate, L-malate, D-malate, L-lactate, D-lactate, L-tartrate, D-tartrate, L-glycerate, D-glycerate, glutarate, or pyruvate. The protein is D-2-hydroxyglutarate dehydrogenase (ydiJ) of Escherichia coli (strain K12).